A 172-amino-acid chain; its full sequence is Translation initiation factor IF-3 (172 aa).

It belongs to the IF-3 family. As to quaternary structure, monomer.

It is found in the cytoplasm. Functionally, IF-3 binds to the 30S ribosomal subunit and shifts the equilibrium between 70S ribosomes and their 50S and 30S subunits in favor of the free subunits, thus enhancing the availability of 30S subunits on which protein synthesis initiation begins. The chain is Translation initiation factor IF-3 from Thermotoga maritima (strain ATCC 43589 / DSM 3109 / JCM 10099 / NBRC 100826 / MSB8).